Here is a 426-residue protein sequence, read N- to C-terminus: tRNA methyltransferase 10 homolog C (426 aa).

A mitochondrion-targeting transit peptide spans 1 to 41; sequence MPVLLKMSVSITFLRPFARVLVPFTLHRKRRVLYSTIMQRY. Ser86 is modified (phosphoserine). Residues 138 to 166 adopt a coiled-coil conformation; it reads LYIKEKMKKARQIKKEMKKAEKEEPKKDQ. The region spanning 193-385 is the SAM-dependent MTase TRM10-type domain; the sequence is MGWKGAQAMQ…KFVPSRKHAG (193 aa).

This sequence belongs to the class IV-like SAM-binding methyltransferase superfamily. TRM10 family. In terms of assembly, component of mitochondrial ribonuclease P, a complex composed of TRMT10C/MRPP1, HSD17B10/MRPP2 and PRORP/MRPP3. Interacts with HSD17B10/MRPP2; forming the MRPP1-MRPP2 subcomplex of the mitochondrial ribonuclease P complex. Interacts with GRSF1.

It localises to the mitochondrion matrix. It is found in the mitochondrion nucleoid. It catalyses the reaction adenosine(9) in tRNA + S-adenosyl-L-methionine = N(1)-methyladenosine(9) in tRNA + S-adenosyl-L-homocysteine + H(+). The enzyme catalyses guanosine(9) in tRNA + S-adenosyl-L-methionine = N(1)-methylguanosine(9) in tRNA + S-adenosyl-L-homocysteine + H(+). The catalysed reaction is an adenosine in mRNA + S-adenosyl-L-methionine = an N(1)-methyladenosine in mRNA + S-adenosyl-L-homocysteine + H(+). In terms of biological role, mitochondrial tRNA N(1)-methyltransferase involved in mitochondrial tRNA maturation. Component of mitochondrial ribonuclease P, a complex composed of TRMT10C/MRPP1, HSD17B10/MRPP2 and PRORP/MRPP3, which cleaves tRNA molecules in their 5'-ends. Together with HSD17B10/MRPP2, forms a subcomplex of the mitochondrial ribonuclease P, named MRPP1-MRPP2 subcomplex, which displays functions that are independent of the ribonuclease P activity. The MRPP1-MRPP2 subcomplex catalyzes the formation of N(1)-methylguanine and N(1)-methyladenine at position 9 (m1G9 and m1A9, respectively) in tRNAs; TRMT10C/MRPP1 acting as the catalytic N(1)-methyltransferase subunit. The MRPP1-MRPP2 subcomplex also acts as a tRNA maturation platform: following 5'-end cleavage by the mitochondrial ribonuclease P complex, the MRPP1-MRPP2 subcomplex enhances the efficiency of 3'-processing catalyzed by ELAC2, retains the tRNA product after ELAC2 processing and presents the nascent tRNA to the mitochondrial CCA tRNA nucleotidyltransferase TRNT1 enzyme. In addition to tRNA N(1)-methyltransferase activity, TRMT10C/MRPP1 also acts as a mRNA N(1)-methyltransferase by mediating methylation of adenosine residues at the N(1) position of MT-ND5 mRNA. Associates with mitochondrial DNA complexes at the nucleoids to initiate RNA processing and ribosome assembly. This chain is tRNA methyltransferase 10 homolog C, found in Bos taurus (Bovine).